The chain runs to 436 residues: Transcriptional regulator STP3 (436 aa).

Residues 204-277 are disordered; the sequence is EPLDDEFVPP…TKRKYTKKKQ (74 aa). Over residues 230 to 265 the composition is skewed to low complexity; sequence ISPPASSDSSSSSSYVPQLIPSSSSSVTSNGDSPVS. Basic residues predominate over residues 268 to 277; the sequence is TKRKYTKKKQ. The C2H2-type zinc-finger motif lies at 315 to 337; the sequence is FDCPSCDASFKVKGYLTRHLKKH.

Activated by the amino acid-induced proteolytic removal of an N-terminal inhibitory domain.

Its subcellular location is the cell membrane. The protein resides in the nucleus. Transcription factor that activates genes required for degradation of extracellular protein and uptake of peptides such as the secreted aspartyl protease SAP2 or the oligopeptide transporter OPT1. Required for virulence. Synthesized as latent cytoplasmic precursor, which, upon a signal initiated by the plasma membrane SPS amino acid sensor system (including CSY1 and CSH3), becomes proteolytically activated and relocates to the nucleus, where it induces the expression of SPS-sensor-regulated genes. This Candida albicans (strain SC5314 / ATCC MYA-2876) (Yeast) protein is Transcriptional regulator STP3 (STP3).